The chain runs to 206 residues: Cytochrome b-245 chaperone 1 homolog (206 aa).

Residues 21–43 (GIRSWSILVGIASVGLAAAYYSS) form a helical membrane-spanning segment. Positions 172–206 (ADDDYPDDDDGIEDLGLGDSSDSQDDPDGDDDEEH) are disordered. Composition is skewed to acidic residues over residues 174–184 (DDYPDDDDGIE) and 193–206 (DSQD…DEEH).

The protein belongs to the CYBC1 family.

It localises to the endoplasmic reticulum membrane. Its function is as follows. Functions as a chaperone necessary for a stable expression of the CYBA and CYBB subunits of the cytochrome b-245 heterodimer. The polypeptide is Cytochrome b-245 chaperone 1 homolog (Danio rerio (Zebrafish)).